A 414-amino-acid chain; its full sequence is Transforming growth factor beta-2 proprotein (414 aa).

The first 20 residues, 1–20 (MHYCVLSAFLLLHLVTVALS), serve as a signal peptide directing secretion. N-linked (GlcNAc...) asparagine glycosylation is found at Asn72, Asn140, and Asn241. Intrachain disulfides connect Cys309/Cys318, Cys317/Cys380, Cys346/Cys411, and Cys350/Cys413.

It belongs to the TGF-beta family. In terms of assembly, interacts with the serine proteases, HTRA1 and HTRA3. Interacts with ASPN. Interacts with MFAP5. Interacts with Transforming growth factor beta-2 (TGF-beta-2) chain; interaction is non-covalent and maintains (TGF-beta-2) in a latent state. Interacts with LRRC32/GARP; leading to regulate activation of TGF-beta-2. Interacts with NREP; the interaction results in a decrease in TGFB2 autoinduction. As to quaternary structure, transforming growth factor beta-2: Homodimer; disulfide-linked. Transforming growth factor beta-2: Interacts with TGF-beta receptors (TGFBR1 and TGFBR2), leading to signal transduction. The precursor proprotein is cleaved in the Golgi apparatus to form Transforming growth factor beta-2 (TGF-beta-2) and Latency-associated peptide (LAP) chains, which remain non-covalently linked, rendering TGF-beta-2 inactive.

The protein localises to the secreted. It localises to the extracellular space. Its subcellular location is the extracellular matrix. Precursor of the Latency-associated peptide (LAP) and Transforming growth factor beta-2 (TGF-beta-2) chains, which constitute the regulatory and active subunit of TGF-beta-2, respectively. Functionally, required to maintain the Transforming growth factor beta-2 (TGF-beta-2) chain in a latent state during storage in extracellular matrix. Associates non-covalently with TGF-beta-2 and regulates its activation via interaction with 'milieu molecules', such as LTBP1 and LRRC32/GARP, that control activation of TGF-beta-2. Its function is as follows. Multifunctional protein that regulates various processes such as angiogenesis and heart development. Activation into mature form follows different steps: following cleavage of the proprotein in the Golgi apparatus, Latency-associated peptide (LAP) and Transforming growth factor beta-2 (TGF-beta-2) chains remain non-covalently linked rendering TGF-beta-2 inactive during storage in extracellular matrix. At the same time, LAP chain interacts with 'milieu molecules', such as LTBP1 and LRRC32/GARP, that control activation of TGF-beta-2 and maintain it in a latent state during storage in extracellular milieus. Once activated following release of LAP, TGF-beta-2 acts by binding to TGF-beta receptors (TGFBR1 and TGFBR2), which transduce signal. This chain is Transforming growth factor beta-2 proprotein (TGFB2), found in Bos taurus (Bovine).